A 62-amino-acid polypeptide reads, in one-letter code: QMTCRISGEVFTWCGTTCPLTCENFRNPPKHCPQGCFVGCMCRRGLVRHRNGRCVRPPRCYY.

Intrachain disulfides connect C4–C40, C14–C36, C18–C32, C22–C60, and C42–C54. One can recognise a TIL domain in the interval 4–60 (CRISGEVFTWCGTTCPLTCENFRNPPKHCPQGCFVGCMCRRGLVRHRNGRCVRPPRC).

The protein belongs to the serine protease inhibitor-like (TIL domain-containing) family. In terms of tissue distribution, expressed by the venom gland.

It is found in the secreted. Functionally, serine protease inhibitor. The sequence is that of Venom peptide SjAPI-2 from Scorpiops jendeki (Scorpion).